A 261-amino-acid polypeptide reads, in one-letter code: Short-chain-enoyl-CoA hydratase (261 aa).

The active-site Nucleophile is the Glu-114. Glu-134 acts as the Proton acceptor in catalysis.

Belongs to the enoyl-CoA hydratase/isomerase family. As to quaternary structure, homotetramer.

The catalysed reaction is a short-chain (3S)-3-hydroxyacyl-CoA = a short-chain (2E)-enoyl-CoA + H2O. It functions in the pathway lipid metabolism; butanoate metabolism. In terms of biological role, catalyzes the reversible hydration of crotonyl-CoA. Can also use hexenoyl-CoA but not higher analogs. The polypeptide is Short-chain-enoyl-CoA hydratase (crt) (Clostridium acetobutylicum (strain ATCC 824 / DSM 792 / JCM 1419 / IAM 19013 / LMG 5710 / NBRC 13948 / NRRL B-527 / VKM B-1787 / 2291 / W)).